Here is a 195-residue protein sequence, read N- to C-terminus: Probable DNA-directed RNA polymerase subunit delta (195 aa).

The region spanning 14-81 is the HTH HARE-type domain; that stretch reads LSMIEVAHAI…GDNTWGLRAW (68 aa). The segment at 91 to 195 is disordered; sequence TVGETEDEED…DEEDKEDDEE (105 aa). 2 stretches are compositionally biased toward acidic residues: residues 116 to 171 and 179 to 195; these read TDDD…EDQL and FGDDEEEDEEDKEDDEE.

This sequence belongs to the RpoE family. In terms of assembly, RNAP is composed of a core of 2 alpha, a beta and a beta' subunits. The core is associated with a delta subunit and one of several sigma factors.

Functionally, participates in both the initiation and recycling phases of transcription. In the presence of the delta subunit, RNAP displays an increased specificity of transcription, a decreased affinity for nucleic acids, and an increased efficiency of RNA synthesis because of enhanced recycling. The protein is Probable DNA-directed RNA polymerase subunit delta of Limosilactobacillus fermentum (strain NBRC 3956 / LMG 18251) (Lactobacillus fermentum).